A 210-amino-acid polypeptide reads, in one-letter code: MSLISNNEERSLRVRYCIAIALSALLISGCTTLRLPNQSTSVYHQQTWAQRYYDLSRISQWNIDGAFSIQQPGKTIIAAYDWQQKGMNYRIRIHSSLDIYSVNISGRPGMVTLWRSPRQHYTASTPEQLMQQQLGWQLPLSNLYYWIRGIPAPGAYQADFDTYTHLIALQQSGWHIRFSQYTTVGSVDLPRTLQLSNGPLAVKIVLKHWQ.

An N-terminal signal peptide occupies residues 1–29; that stretch reads MSLISNNEERSLRVRYCIAIALSALLISG. A lipid anchor (N-palmitoyl cysteine) is attached at Cys-30. Cys-30 carries the S-diacylglycerol cysteine lipid modification.

This sequence belongs to the LolB family. In terms of assembly, monomer.

It localises to the cell outer membrane. In terms of biological role, plays a critical role in the incorporation of lipoproteins in the outer membrane after they are released by the LolA protein. In Coxiella burnetii (strain CbuK_Q154) (Coxiella burnetii (strain Q154)), this protein is Outer-membrane lipoprotein LolB.